The primary structure comprises 686 residues: Leucine-rich repeat-containing protein 49 (686 aa).

LRR repeat units lie at residues 113–134, 135–156, 157–178, 179–200, 201–222, 223–244, and 245–266; these read HLRL…SNLQ, RLIF…STLK, SLRV…ENLK, NLDV…NHLC, DLRV…NGLD, SLTE…DNLP, and CLQR…SCLA. Residues 279–317 enclose the LRRCT domain; the sequence is NPIAQESWYKHTVLQNMMQLRQLDMKRITEEERRVASVV. Disordered stretches follow at residues 311–332 and 359–381; these read RRVA…HKQS and ASTQ…DGGN. Residues 319–341 adopt a coiled-coil conformation; that stretch reads KKEEEKKRESHKQSLLKEKKRLT.

As to quaternary structure, part of the neuronal tubulin polyglutamylase complex which contains TPGS1, TPGS2, TTLL1, LRRC49 and NICN1. Interacts with PCM1; TTLL1, TPGS1, TPGS2 and LRRC49.

It is found in the cytoplasm. The protein localises to the cytoskeleton. It localises to the microtubule organizing center. Its subcellular location is the centrosome. The protein resides in the centriolar satellite. In terms of biological role, subunit of the tubulin polyglutamylase complex (TPGC). The complex mediates cilia and flagella polyglutamylation which is essential for their biogenesis and motility. The polypeptide is Leucine-rich repeat-containing protein 49 (Lrrc49) (Mus musculus (Mouse)).